The following is a 202-amino-acid chain: Protein cuti-1 (202 aa).

At 1-37 (MPNDRVAPLPPNFVYSPHDKFYYAPATCNSMHYTTAS) the chain is on the cytoplasmic side. The chain crosses the membrane as a helical span at residues 38–58 (YISAFIEFLVMGTGAICFYVM). Residues 59–68 (SHKSDSIGKW) lie on the Extracellular side of the membrane. Residues 69–89 (LFYIQAGITVLSLLTSALMAF) traverse the membrane as a helical segment. The Cytoplasmic portion of the chain corresponds to 90-107 (GLWKENPQMLGSKLKFIE). Residues 108 to 128 (FIICFLLIWAVISIVCMAFGI) form a helical membrane-spanning segment. Residues 129–148 (QFTRQVFGIFGKVHRIEQDY) lie on the Extracellular side of the membrane. Residues 149–169 (GPIWPFNIAVVSFFTAAIAIW) traverse the membrane as a helical segment. The Cytoplasmic portion of the chain corresponds to 170–202 (TRIIIQGAADYLYDKAYFADKQNVELRESSKTR).

In terms of assembly, interacts with vps-39.

It localises to the cell membrane. The protein resides in the cytoplasm. In terms of biological role, involved in cuticle formation and ensures cuticle shedding during larval development. Plays a role in maintaining the hypodermis. In association with vps-39, may play a role in vesicle tethering. The chain is Protein cuti-1 from Caenorhabditis elegans.